The chain runs to 68 residues: Large ribosomal subunit protein uL29 (68 aa).

It belongs to the universal ribosomal protein uL29 family.

This chain is Large ribosomal subunit protein uL29, found in Finegoldia magna (strain ATCC 29328 / DSM 20472 / WAL 2508) (Peptostreptococcus magnus).